Reading from the N-terminus, the 657-residue chain is ER degradation-enhancing alpha-mannosidase-like protein 1 (657 aa).

At 1–4 (MQWR) the chain is on the cytoplasmic side. A helical; Signal-anchor for type II membrane protein transmembrane segment spans residues 5-25 (ALVLGLVLLRLGLHGVLWLVF). Residues 26–657 (GLGPSMGFYQ…RQIDQMVGLI (632 aa)) lie on the Lumenal side of the membrane. Positions 48–94 (SPDGPASPTSGPVGRPGGVSGPSWLQPPGTGAAQSPRKAPRRPGPGM) are disordered. N181, N198, N299, N342, and N624 each carry an N-linked (GlcNAc...) asparagine glycan.

The protein belongs to the glycosyl hydrolase 47 family. Interacts with DNAJC10. Interacts with DERL2 and DERL3. Binds to SEL1L.

The protein resides in the endoplasmic reticulum membrane. In terms of biological role, extracts misfolded glycoproteins, but not glycoproteins undergoing productive folding, from the calnexin cycle. It is directly involved in endoplasmic reticulum-associated degradation (ERAD) and targets misfolded glycoproteins for degradation in an N-glycan-independent manner, probably by forming a complex with SEL1L. It has low mannosidase activity, catalyzing mannose trimming from Man8GlcNAc2 to Man7GlcNAc2. This is ER degradation-enhancing alpha-mannosidase-like protein 1 (EDEM1) from Homo sapiens (Human).